Consider the following 230-residue polypeptide: Ropporin-1-like protein (230 aa).

Residues 17-54 (PELPDILKQFTKAAIRTQPADVLQWSAGYFSALSRGDP) form the RIIa domain.

This sequence belongs to the ropporin family. Component of the axonemal radial spoke complex 1 (RS1), at least composed of spoke head proteins RSPH1, RSPH3, RSPH9 and the cilia-specific component RSPH4A or sperm-specific component RSPH6A, spoke stalk proteins RSPH14, DNAJB13, DYDC1, ROPN1L and NME5, and the anchor protein IQUB. May interact with AKAP3. Interacts with FSCB; the interaction increases upon spermatozoa capacitation conditions. Interacts with CFAP61. In terms of processing, sumoylated, sumoylation decreases upon spermatozoa capacitation conditions.

The protein resides in the cell projection. It localises to the cilium. The protein localises to the flagellum. In terms of biological role, functions as part of axonemal radial spoke complexes that play an important part in the motility of sperm and cilia. Important for male fertility. With ROPN1, involved in fibrous sheath integrity and sperm motility, plays a role in PKA-dependent signaling processes required for spermatozoa capacitation. This Macaca fascicularis (Crab-eating macaque) protein is Ropporin-1-like protein (ROPN1L).